A 481-amino-acid polypeptide reads, in one-letter code: Bifunctional protein GlmU (481 aa).

Residues 1–235 (MTHKERPLDV…PDEVMGANDR (235 aa)) are pyrophosphorylase. UDP-N-acetyl-alpha-D-glucosamine-binding positions include 13–16 (LAAG), lysine 27, glutamine 78, 83–84 (GT), 107–109 (YGD), glycine 146, glutamate 161, asparagine 176, and asparagine 233. Aspartate 109 is a binding site for Mg(2+). A Mg(2+)-binding site is contributed by asparagine 233. The tract at residues 236–256 (VQLAQAAAVLRRRINTAHMQA) is linker. Residues 257–481 (GVTLQDPSTI…PWLAGWLERQ (225 aa)) are N-acetyltransferase. 2 residues coordinate UDP-N-acetyl-alpha-D-glucosamine: arginine 339 and lysine 357. The active-site Proton acceptor is the histidine 369. Tyrosine 372 and asparagine 383 together coordinate UDP-N-acetyl-alpha-D-glucosamine. 4 residues coordinate acetyl-CoA: alanine 386, serine 411, alanine 429, and arginine 446.

It in the N-terminal section; belongs to the N-acetylglucosamine-1-phosphate uridyltransferase family. In the C-terminal section; belongs to the transferase hexapeptide repeat family. As to quaternary structure, homotrimer. Mg(2+) is required as a cofactor.

It localises to the cytoplasm. It catalyses the reaction alpha-D-glucosamine 1-phosphate + acetyl-CoA = N-acetyl-alpha-D-glucosamine 1-phosphate + CoA + H(+). The enzyme catalyses N-acetyl-alpha-D-glucosamine 1-phosphate + UTP + H(+) = UDP-N-acetyl-alpha-D-glucosamine + diphosphate. Its pathway is nucleotide-sugar biosynthesis; UDP-N-acetyl-alpha-D-glucosamine biosynthesis; N-acetyl-alpha-D-glucosamine 1-phosphate from alpha-D-glucosamine 6-phosphate (route II): step 2/2. It functions in the pathway nucleotide-sugar biosynthesis; UDP-N-acetyl-alpha-D-glucosamine biosynthesis; UDP-N-acetyl-alpha-D-glucosamine from N-acetyl-alpha-D-glucosamine 1-phosphate: step 1/1. It participates in bacterial outer membrane biogenesis; LPS lipid A biosynthesis. Catalyzes the last two sequential reactions in the de novo biosynthetic pathway for UDP-N-acetylglucosamine (UDP-GlcNAc). The C-terminal domain catalyzes the transfer of acetyl group from acetyl coenzyme A to glucosamine-1-phosphate (GlcN-1-P) to produce N-acetylglucosamine-1-phosphate (GlcNAc-1-P), which is converted into UDP-GlcNAc by the transfer of uridine 5-monophosphate (from uridine 5-triphosphate), a reaction catalyzed by the N-terminal domain. The sequence is that of Bifunctional protein GlmU from Deinococcus geothermalis (strain DSM 11300 / CIP 105573 / AG-3a).